The primary structure comprises 378 residues: Packaging protein 3 (378 aa).

2 disordered regions span residues 1–73 (MHPV…EGPV) and 355–378 (SRPP…DDFI). The interval 1-178 (MHPVLQSVRN…AFGEELRNTC (178 aa)) is interaction with packaging protein 1. Low complexity-rich tracts occupy residues 16–35 (GGPH…SVRR) and 49–58 (PGAGATPTAG). Phosphoserine; by host is present on Ser362. The segment covering 363-378 (FADEGPSESDDEDDFI) has biased composition (acidic residues).

The protein belongs to the adenoviridae packaging protein 3 family. In terms of assembly, part of the genome packaging complex composed of packaging proteins 1, 2 and 3; this complex specifically binds to the packaging sequence on the left end of viral genomic DNA and performs packaging of the viral genome. Interacts with hexon-linking protein IIIa; this interaction is required to promote correct genome packaging. Cleaved at different sites by the viral protease during virion maturation.

The protein resides in the host nucleus. In terms of biological role, involved in viral genome packaging through its interaction with packaging proteins 1 and 2. After proteolytic cleavage by adenovirus protease, L1 52/55k protein is removed from the capsid during viral maturation. This is Packaging protein 3 from Galliformes (FAdV-1).